Consider the following 24-residue polypeptide: Ranatuerin-4 (24 aa).

A disulfide bridge connects residues Cys-18 and Cys-24.

It belongs to the frog skin active peptide (FSAP) family. Ranatuerin subfamily. In terms of tissue distribution, expressed by the skin glands.

Its subcellular location is the secreted. Antibacterial activity against Gram-positive bacterium S.aureus (MIC=55 uM). Shows no detectable hemolytic activity towards human erythrocytes. This chain is Ranatuerin-4, found in Aquarana catesbeiana (American bullfrog).